The primary structure comprises 225 residues: Membrane protein (225 aa).

Residues 1–20 are Virion surface-facing; it reads MSNETNCTLDFEQSVELFKE. A helical transmembrane segment spans residues 21-41; sequence YNLFITAFLLFLTIILQYGYA. Residues 42–51 lie on the Intravirion side of the membrane; the sequence is TRSKFIYILK. Residues 52–72 traverse the membrane as a helical segment; that stretch reads MIVLWCFWPLNIAVGVISCIY. The Virion surface portion of the chain corresponds to 73-77; it reads PPNTG. Residues 78 to 98 traverse the membrane as a helical segment; the sequence is GLVAAIILTVFACLSFVGYWI. Topologically, residues 99–225 are intravirion; the sequence is QSIRLFKRCR…VATGGSSLYT (127 aa).

Belongs to the gammacoronaviruses M protein family. In terms of assembly, homomultimer. Interacts with envelope E protein in the budding compartment of the host cell, which is located between endoplasmic reticulum and the Golgi complex. Forms a complex with HE and S proteins. Interacts with nucleocapsid N protein. This interaction probably participates in RNA packaging into the virus.

It localises to the virion membrane. The protein localises to the host Golgi apparatus membrane. Component of the viral envelope that plays a central role in virus morphogenesis and assembly via its interactions with other viral proteins. This Gallus gallus (Chicken) protein is Membrane protein.